We begin with the raw amino-acid sequence, 188 residues long: Capsid protein (188 aa).

It belongs to the tymoviruses capsid protein family.

It is found in the virion. In terms of biological role, self-assembles to form a T=3 icosahedral capsid composed of 180 copies of the capsid protein. The capsid encapsulates the single-stranded RNA genome. In Theobroma cacao (Cacao), this protein is Capsid protein.